A 120-amino-acid polypeptide reads, in one-letter code: Large ribosomal subunit protein uL14 (120 aa).

This sequence belongs to the universal ribosomal protein uL14 family. As to quaternary structure, part of the 50S ribosomal subunit. Forms a cluster with proteins L3 and L19. In the 70S ribosome, L14 and L19 interact and together make contacts with the 16S rRNA in bridges B5 and B8.

Binds to 23S rRNA. Forms part of two intersubunit bridges in the 70S ribosome. The sequence is that of Large ribosomal subunit protein uL14 from Karelsulcia muelleri (strain GWSS) (Sulcia muelleri).